We begin with the raw amino-acid sequence, 393 residues long: Chalcone synthase 1 (393 aa).

Cys-166 is a catalytic residue.

It belongs to the thiolase-like superfamily. Chalcone/stilbene synthases family.

The catalysed reaction is (E)-4-coumaroyl-CoA + 3 malonyl-CoA + 3 H(+) = 2',4,4',6'-tetrahydroxychalcone + 3 CO2 + 4 CoA. The protein operates within secondary metabolite biosynthesis; flavonoid biosynthesis. The primary product of this enzyme is 4,2',4',6'-tetrahydroxychalcone (also termed naringenin-chalcone or chalcone) which can under specific conditions spontaneously isomerize into naringenin. The polypeptide is Chalcone synthase 1 (CHS1) (Ruta graveolens (Common rue)).